Here is a 181-residue protein sequence, read N- to C-terminus: ATP synthase subunit b (181 aa).

The helical transmembrane segment at 16–36 (LIPPIPELVIGLIAFVIVFGF) threads the bilayer.

The protein belongs to the ATPase B chain family. As to quaternary structure, F-type ATPases have 2 components, F(1) - the catalytic core - and F(0) - the membrane proton channel. F(1) has five subunits: alpha(3), beta(3), gamma(1), delta(1), epsilon(1). F(0) has three main subunits: a(1), b(2) and c(10-14). The alpha and beta chains form an alternating ring which encloses part of the gamma chain. F(1) is attached to F(0) by a central stalk formed by the gamma and epsilon chains, while a peripheral stalk is formed by the delta and b chains.

It is found in the cell membrane. Its function is as follows. F(1)F(0) ATP synthase produces ATP from ADP in the presence of a proton or sodium gradient. F-type ATPases consist of two structural domains, F(1) containing the extramembraneous catalytic core and F(0) containing the membrane proton channel, linked together by a central stalk and a peripheral stalk. During catalysis, ATP synthesis in the catalytic domain of F(1) is coupled via a rotary mechanism of the central stalk subunits to proton translocation. In terms of biological role, component of the F(0) channel, it forms part of the peripheral stalk, linking F(1) to F(0). The sequence is that of ATP synthase subunit b from Streptomyces lividans.